Here is a 498-residue protein sequence, read N- to C-terminus: Glycerol kinase (498 aa).

Residue Thr12 participates in ADP binding. Positions 12, 13, and 14 each coordinate ATP. Thr12 is a sn-glycerol 3-phosphate binding site. Arg16 contributes to the ADP binding site. Positions 82, 83, and 134 each coordinate sn-glycerol 3-phosphate. Residues Arg82, Glu83, and Tyr134 each contribute to the glycerol site. Phosphohistidine; by HPr is present on His230. A sn-glycerol 3-phosphate-binding site is contributed by Asp244. Glycerol contacts are provided by Asp244 and Gln245. Residues Thr266 and Gly309 each coordinate ADP. ATP contacts are provided by Thr266, Gly309, Gln313, and Gly410. Residues Gly410 and Asn414 each contribute to the ADP site.

The protein belongs to the FGGY kinase family. In terms of assembly, homotetramer and homodimer (in equilibrium). Post-translationally, the phosphoenolpyruvate-dependent sugar phosphotransferase system (PTS), including enzyme I, and histidine-containing protein (HPr) are required for the phosphorylation, which leads to the activation of the enzyme.

It carries out the reaction glycerol + ATP = sn-glycerol 3-phosphate + ADP + H(+). It functions in the pathway polyol metabolism; glycerol degradation via glycerol kinase pathway; sn-glycerol 3-phosphate from glycerol: step 1/1. Its activity is regulated as follows. Activated by phosphorylation and inhibited by fructose 1,6-bisphosphate (FBP). Functionally, key enzyme in the regulation of glycerol uptake and metabolism. Catalyzes the phosphorylation of glycerol to yield sn-glycerol 3-phosphate. This is Glycerol kinase from Staphylococcus aureus (strain MSSA476).